Reading from the N-terminus, the 406-residue chain is Phosphopentomutase (406 aa).

Mn(2+)-binding residues include D10, D305, H310, D346, H347, and H358.

Belongs to the phosphopentomutase family. It depends on Mn(2+) as a cofactor.

Its subcellular location is the cytoplasm. It catalyses the reaction 2-deoxy-alpha-D-ribose 1-phosphate = 2-deoxy-D-ribose 5-phosphate. The enzyme catalyses alpha-D-ribose 1-phosphate = D-ribose 5-phosphate. Its pathway is carbohydrate degradation; 2-deoxy-D-ribose 1-phosphate degradation; D-glyceraldehyde 3-phosphate and acetaldehyde from 2-deoxy-alpha-D-ribose 1-phosphate: step 1/2. Its function is as follows. Isomerase that catalyzes the conversion of deoxy-ribose 1-phosphate (dRib-1-P) and ribose 1-phosphate (Rib-1-P) to deoxy-ribose 5-phosphate (dRib-5-P) and ribose 5-phosphate (Rib-5-P), respectively. This is Phosphopentomutase from Rhizobium johnstonii (strain DSM 114642 / LMG 32736 / 3841) (Rhizobium leguminosarum bv. viciae).